A 420-amino-acid chain; its full sequence is MTEDIRAYMQTLGRQAREAAREMARADTGHKNAALHAMADALEEHAGDLKRANADDLENGRANNLDPALLDRLELNDERIHGMAEGLRQIAALPDPVGAIRDLAFRPSGIQVGRMRVPLGVIGIIYESRPNVTADAAALCLKSGNAAILRGGSEARHSNAAIAACVRAGLKRAGLPGEAVQVVETTDRAAVGELIRMDEYVDVLVPRGGKGLIERITAEATVPVIKHLDGICHVYIDDSADPAKAISVAYNAKTQRLGTCNTMETLLVAEAIAERVLPELARRYRESEVELRGCEATRRLIPDAVPATKEDWSTEYLDAIVSIRIVPGLDEAIEHIARHSSGHTESILTEDWSRARRFLREVDSSSVMVNASTRFADGFEYGLGAEIGISTDKLHARGPVGLEGLTTEKFIVLGDGHIRE.

It belongs to the gamma-glutamyl phosphate reductase family.

Its subcellular location is the cytoplasm. It catalyses the reaction L-glutamate 5-semialdehyde + phosphate + NADP(+) = L-glutamyl 5-phosphate + NADPH + H(+). It functions in the pathway amino-acid biosynthesis; L-proline biosynthesis; L-glutamate 5-semialdehyde from L-glutamate: step 2/2. Catalyzes the NADPH-dependent reduction of L-glutamate 5-phosphate into L-glutamate 5-semialdehyde and phosphate. The product spontaneously undergoes cyclization to form 1-pyrroline-5-carboxylate. The protein is Gamma-glutamyl phosphate reductase of Alkalilimnicola ehrlichii (strain ATCC BAA-1101 / DSM 17681 / MLHE-1).